Reading from the N-terminus, the 342-residue chain is Putative ABC transporter anion-binding protein HVO_1888 (342 aa).

The tat-type signal signal peptide spans methionine 1–alanine 32. Positions threonine 24 to alanine 37 are enriched in polar residues. The tract at residues threonine 24–glutamate 52 is disordered.

In terms of assembly, the complex is composed of two ATP-binding proteins (HVO_1886), two transmembrane proteins (HVO_1887) and a solute-binding protein (HVO_1888). Post-translationally, predicted to be exported by the Tat system. The position of the signal peptide cleavage has not been experimentally proven.

Part of an ABC transporter complex involved in anions import. In Haloferax volcanii (strain ATCC 29605 / DSM 3757 / JCM 8879 / NBRC 14742 / NCIMB 2012 / VKM B-1768 / DS2) (Halobacterium volcanii), this protein is Putative ABC transporter anion-binding protein HVO_1888.